Consider the following 128-residue polypeptide: Flagellar hook-basal body complex protein FliE (128 aa).

The disordered stretch occupies residues 1–60 (MRPVASFRPPPTFSALQGGASSQATKTAGIDQRGTNQAFSLLDPQSTQSNSTDSSFGEMG). Polar residues predominate over residues 33 to 55 (RGTNQAFSLLDPQSTQSNSTDSS).

Belongs to the FliE family.

The protein resides in the bacterial flagellum basal body. In Rhodopirellula baltica (strain DSM 10527 / NCIMB 13988 / SH1), this protein is Flagellar hook-basal body complex protein FliE.